A 153-amino-acid polypeptide reads, in one-letter code: Regulatory protein RecX (153 aa).

It belongs to the RecX family.

The protein localises to the cytoplasm. Modulates RecA activity. This Vibrio vulnificus (strain CMCP6) protein is Regulatory protein RecX.